Consider the following 174-residue polypeptide: Shikimate kinase (174 aa).

An ATP-binding site is contributed by 10-15 (GSGKTA). Residue threonine 14 coordinates Mg(2+). Substrate contacts are provided by aspartate 32, arginine 56, and glycine 78. Arginine 118 lines the ATP pocket. Arginine 137 provides a ligand contact to substrate. Arginine 154 contributes to the ATP binding site.

Belongs to the shikimate kinase family. As to quaternary structure, monomer. Requires Mg(2+) as cofactor.

The protein resides in the cytoplasm. It catalyses the reaction shikimate + ATP = 3-phosphoshikimate + ADP + H(+). Its pathway is metabolic intermediate biosynthesis; chorismate biosynthesis; chorismate from D-erythrose 4-phosphate and phosphoenolpyruvate: step 5/7. In terms of biological role, catalyzes the specific phosphorylation of the 3-hydroxyl group of shikimic acid using ATP as a cosubstrate. This is Shikimate kinase from Symbiobacterium thermophilum (strain DSM 24528 / JCM 14929 / IAM 14863 / T).